A 484-amino-acid chain; its full sequence is MRSAYPVLTALLVVASSQIAAGSGHQLQAYDHDRITDDNAVMKSLSTRFLRGSRDVHNNVANEERSVYSVLARMIKKGIKKMPRTAEVLKMKPHIKKASKKSPHEARLVKELFHAAEAKETMQGAREYKKLRRATRAAVEALEKHWNPSKTAVSGDAFHDIHSNQMLSVKKWKFNLTGLKPMVVNDEHHGMIDSVHKAFLTVCDKNVKPTRAETSYLWGLMNWKLAKYPRRSHKESLIEHAQRRVLLDMRKMKATKKVWPEWENLPDSLKFGVLDYLLNLHYQRLVRMYNIFARNRPDRNPAPLNPELNPVGNTGTSAAMAVAENPKGQSPYPSTPLTAASTSKGGRSNLKKRSKRTSDGNTDTASFPSKKLKVRSSKSVMPLLTEPTTSGDHSAPAKKSKSSSSGPSRAFAPDKSGDQTFITENSRLSFDGPSSAVDPFKQSKVHESKSLAPSSSVLTPEDVDTELSLGGIYDRSTYKAPSKP.

Positions 1-24 (MRSAYPVLTALLVVASSQIAAGSG) are cleaved as a signal peptide. Positions 48 to 65 (RFLRGSRDVHNNVANEER) match the RxLR-dEER motif. N-linked (GlcNAc...) asparagine glycosylation is present at N175. The tract at residues 324 to 463 (ENPKGQSPYP…SSSVLTPEDV (140 aa)) is disordered. Residues 327–346 (KGQSPYPSTPLTAASTSKGG) show a composition bias toward polar residues. Positions 402–413 (SSSSGPSRAFAP) are enriched in low complexity. The span at 418-428 (DQTFITENSRL) shows a compositional bias: polar residues.

It belongs to the RxLR effector family.

The protein localises to the secreted. It is found in the host nucleus. Secreted effector that completely suppresses the host cell death induced by cell death-inducing proteins. This chain is Secreted RxLR effector protein 104, found in Plasmopara viticola (Downy mildew of grapevine).